A 198-amino-acid chain; its full sequence is Probable chemoreceptor glutamine deamidase CheD (198 aa).

Belongs to the CheD family.

It catalyses the reaction L-glutaminyl-[protein] + H2O = L-glutamyl-[protein] + NH4(+). Probably deamidates glutamine residues to glutamate on methyl-accepting chemotaxis receptors (MCPs), playing an important role in chemotaxis. The protein is Probable chemoreceptor glutamine deamidase CheD of Xanthomonas axonopodis pv. citri (strain 306).